The following is a 340-amino-acid chain: Glyceraldehyde-3-phosphate dehydrogenase (340 aa).

Residues 11–12 and G109 contribute to the NAD(+) site; that span reads TI. 138 to 140 serves as a coordination point for D-glyceraldehyde 3-phosphate; sequence SCN. Residue C139 is the Nucleophile of the active site. R167 lines the NAD(+) pocket. 193-194 lines the D-glyceraldehyde 3-phosphate pocket; it reads HA. Q300 serves as a coordination point for NAD(+).

This sequence belongs to the glyceraldehyde-3-phosphate dehydrogenase family. Homotetramer.

The protein localises to the cytoplasm. The catalysed reaction is D-glyceraldehyde 3-phosphate + phosphate + NADP(+) = (2R)-3-phospho-glyceroyl phosphate + NADPH + H(+). It carries out the reaction D-glyceraldehyde 3-phosphate + phosphate + NAD(+) = (2R)-3-phospho-glyceroyl phosphate + NADH + H(+). It functions in the pathway carbohydrate degradation; glycolysis; pyruvate from D-glyceraldehyde 3-phosphate: step 1/5. In Saccharolobus islandicus (strain M.14.25 / Kamchatka #1) (Sulfolobus islandicus), this protein is Glyceraldehyde-3-phosphate dehydrogenase.